A 159-amino-acid polypeptide reads, in one-letter code: U1 small nuclear ribonucleoprotein C (159 aa).

The Matrin-type zinc-finger motif lies at 4–36 (FYCDYCDTYLTHDSPSVRKTHCSGRKHKENVKD). 2 disordered regions span residues 63 to 95 (PPTPFAAPPAGSAMIPPPPSMGGPPRPGMMPAP) and 139 to 159 (MRPPTRPMMLQSRPGMARPDR). A compositionally biased stretch (pro residues) spans 77 to 95 (IPPPPSMGGPPRPGMMPAP).

It belongs to the U1 small nuclear ribonucleoprotein C family. In terms of assembly, component of the U1 snRNP. The U1 snRNP is composed of the U1 snRNA and the 7 core Sm proteins snrpb, snrpd1, snrpd2, snrpd3, snrpe, snrpf and snrpg that assemble in a heptameric protein ring on the Sm site of the small nuclear RNA to form the core snRNP, and at least 3 U1 snRNP-specific proteins snrnp70/U1-70K, snrpa/U1-A and snrpc/U1-C. snrpc/U1-C interacts with U1 snRNA and the 5' splice-site region of the pre-mRNA.

It is found in the nucleus. Its function is as follows. Component of the spliceosomal U1 snRNP, which is essential for recognition of the pre-mRNA 5' splice-site and the subsequent assembly of the spliceosome. snrpc/U1-C is directly involved in initial 5' splice-site recognition for both constitutive and regulated alternative splicing. The interaction with the 5' splice-site seems to precede base-pairing between the pre-mRNA and the U1 snRNA. Stimulates commitment or early (E) complex formation by stabilizing the base pairing of the 5' end of the U1 snRNA and the 5' splice-site region. This Xenopus tropicalis (Western clawed frog) protein is U1 small nuclear ribonucleoprotein C.